The primary structure comprises 172 residues: R-phycocyanin-1 beta chain (172 aa).

Asn-72 carries the post-translational modification N4-methylasparagine. Cys-82 is a binding site for (2R,3E)-phycocyanobilin. Cys-153 is a binding site for (2R,3E)-phycoerythrobilin.

This sequence belongs to the phycobiliprotein family. As to quaternary structure, heterodimer of an alpha and a beta chain. Dimers further assemble into trimers and the trimers into hexamers. The basic functional unit of phycobiliproteins is a ring-shaped hexamer formed from two back-to-back trimers contacting via the alpha chain subunits. The trimers are composed of alpha/beta subunit heterodimers arranged around a three-fold axis of symmetry. The phycoerythrins also contain a gamma subunit which is located in the center of the hexamer. In terms of processing, contains two covalently linked bilin chromophores.

The protein resides in the plastid. The protein localises to the chloroplast thylakoid membrane. Its function is as follows. Light-harvesting photosynthetic bile pigment-protein from the phycobiliprotein complex (phycobilisome, PBS). Phycocyanin is the major phycobiliprotein in the PBS rod. The sequence is that of R-phycocyanin-1 beta chain (rpcB) from Porphyridium purpureum (Red alga).